The chain runs to 489 residues: Retinoblastoma-binding protein 5 homolog (489 aa).

WD repeat units follow at residues 22 to 63, 64 to 103, 147 to 187, 195 to 234, 248 to 290, and 292 to 330; these read DCIS…KIIS, AHVHPVCSLSWTRNGHKLLSASTDNNVCIWDVLTGELEHK, DSDG…VVAS, SSATAVKSIEFARRGDAFLINTSDRVIRVYDSKEIITLGK, VNKT…KILH, and TKGELLLDVVWHPVRPIIASISSGLVSIWAQNQVENWSA. Residues 451 to 489 are disordered; that stretch reads DVSLPDAPTDETHPLISSKASKDKQQPVGGKKAAGRTKK.

Core component of several methyltransferase-containing complexes. Component of the SET1 complex, composed at least of the catalytic subunit Set1, wds/WDR5, Wdr82, Rbbp5, ash2, Cfp1/CXXC1, hcf and Dpy-30L1. Component of the MLL3/4 complex composed at least of the catalytic subunit trr, ash2, Rbbp5, Dpy-30L1, wds, hcf, ptip, Pa1, Utx, Lpt and Ncoa6.

The protein localises to the nucleus. Functionally, component of the SET1 complex that specifically di- and trimethylates 'Lys-4' of histone H3 and of the MLL3/4 complex which also methylates histone H3 'Lys-4'. This chain is Retinoblastoma-binding protein 5 homolog, found in Drosophila melanogaster (Fruit fly).